The sequence spans 55 residues: Large ribosomal subunit protein bL33c (55 aa).

This sequence belongs to the bacterial ribosomal protein bL33 family.

Its subcellular location is the plastid. It is found in the chloroplast. This is Large ribosomal subunit protein bL33c from Emiliania huxleyi (Coccolithophore).